Reading from the N-terminus, the 376-residue chain is Galactoside alpha-(1,2)-fucosyltransferase 1 (376 aa).

Residues 1–12 (MWTPSRKQLCLA) are Cytoplasmic-facing. The chain crosses the membrane as a helical; Signal-anchor for type II membrane protein span at residues 13 to 29 (FLSVCVLSAGSFFFHLN). The Lumenal portion of the chain corresponds to 30–376 (GGNFFQNALT…WETDSLFRLA (347 aa)). Asn64, Asn302, and Asn328 each carry an N-linked (GlcNAc...) asparagine glycan.

It belongs to the glycosyltransferase 11 family.

It localises to the golgi apparatus. The protein resides in the golgi stack membrane. It carries out the reaction a beta-D-galactosyl-(1-&gt;4)-N-acetyl-beta-D-glucosaminyl derivative + GDP-beta-L-fucose = an alpha-L-Fuc-(1-&gt;2)-beta-D-Gal-(1-&gt;4)-beta-D-GlcNAc derivative + GDP + H(+). It catalyses the reaction a ganglioside GA1 + GDP-beta-L-fucose = a ganglioside Fuc-GA1 + GDP + H(+). The catalysed reaction is a beta-D-Gal-(1-&gt;3)-beta-D-GlcNAc-(1-&gt;3)-beta-D-Gal-(1-&gt;4)-beta-D-Glc-(1&lt;-&gt;1')-Cer(d18:1(4E)) + GDP-beta-L-fucose = alpha-L-fucosyl-(1-&gt;2)- beta-D-galactosyl-(1-&gt;3)-N-acetyl-beta-D-glucosaminyl-(1-&gt;3)-beta-D-galactosyl-(1-&gt;4)-beta-D-glucosyl-(1&lt;-&gt;1')-N-acylsphing-4-enine + GDP + H(+). The enzyme catalyses a neolactoside nLc4Cer(d18:1(4E)) + GDP-beta-L-fucose = a neolactoside IV(2)-alpha-Fuc-nLc4Cer(d18:1(4E)) + GDP + H(+). It carries out the reaction a ganglioside GM1 + GDP-beta-L-fucose = a ganglioside Fuc-GM1 + GDP + H(+). It catalyses the reaction beta-D-galactosyl-(1-&gt;3)-N-acetyl-D-galactosamine + GDP-beta-L-fucose = alpha-L-fucosyl-(1-&gt;2)-beta-D-galactosyl-(1-&gt;3)-N-acetyl-D-galactosamine + GDP + H(+). It functions in the pathway protein modification; protein glycosylation. Catalyzes the transfer of L-fucose, from a guanosine diphosphate-beta-L-fucose, to the terminal galactose residue of glycoconjugates through an alpha(1,2) linkage leading to H antigen synthesis that is an intermediate substrate in the synthesis of ABO blood group antigens. H antigen is essential for maturation of the glomerular layer of the main olfactory bulb, in cell migration and early cell-cell contacts during tumor associated angiogenesis. Preferentially fucosylates soluble lactose and to a lesser extent fucosylates glycolipids gangliosides GA1 and GM1a. This is Galactoside alpha-(1,2)-fucosyltransferase 1 from Rattus norvegicus (Rat).